The sequence spans 103 residues: Small ribosomal subunit protein uS10 (103 aa).

This sequence belongs to the universal ribosomal protein uS10 family. As to quaternary structure, part of the 30S ribosomal subunit.

Its function is as follows. Involved in the binding of tRNA to the ribosomes. The sequence is that of Small ribosomal subunit protein uS10 from Alcanivorax borkumensis (strain ATCC 700651 / DSM 11573 / NCIMB 13689 / SK2).